The sequence spans 133 residues: Large-conductance mechanosensitive channel (133 aa).

Transmembrane regions (helical) follow at residues 8 to 28, 30 to 50, and 73 to 93; these read FAMKGNVVDLAVGVIIGGAFG, IVTSLVNDVIMPILGLILGGI, and GQFIQNILDFLIISFSIFLFI.

It belongs to the MscL family. Homopentamer.

It localises to the cell membrane. In terms of biological role, channel that opens in response to stretch forces in the membrane lipid bilayer. May participate in the regulation of osmotic pressure changes within the cell. The sequence is that of Large-conductance mechanosensitive channel from Hathewaya histolytica (Clostridium histolyticum).